The sequence spans 212 residues: Pyridoxine/pyridoxamine 5'-phosphate oxidase (212 aa).

Substrate contacts are provided by residues 8 to 11 (RREY) and Lys66. FMN contacts are provided by residues 61–66 (RIVLLK), 76–77 (FT), Arg82, Lys83, and Gln105. Substrate contacts are provided by Tyr123, Arg127, and Ser131. FMN contacts are provided by residues 140-141 (QS) and Trp185. 191–193 (RLH) contacts substrate. Position 195 (Arg195) interacts with FMN.

It belongs to the pyridoxamine 5'-phosphate oxidase family. Homodimer. Requires FMN as cofactor.

The catalysed reaction is pyridoxamine 5'-phosphate + O2 + H2O = pyridoxal 5'-phosphate + H2O2 + NH4(+). The enzyme catalyses pyridoxine 5'-phosphate + O2 = pyridoxal 5'-phosphate + H2O2. Its pathway is cofactor metabolism; pyridoxal 5'-phosphate salvage; pyridoxal 5'-phosphate from pyridoxamine 5'-phosphate: step 1/1. It participates in cofactor metabolism; pyridoxal 5'-phosphate salvage; pyridoxal 5'-phosphate from pyridoxine 5'-phosphate: step 1/1. In terms of biological role, catalyzes the oxidation of either pyridoxine 5'-phosphate (PNP) or pyridoxamine 5'-phosphate (PMP) into pyridoxal 5'-phosphate (PLP). This is Pyridoxine/pyridoxamine 5'-phosphate oxidase from Shewanella putrefaciens (strain CN-32 / ATCC BAA-453).